The sequence spans 254 residues: 5'-nucleotidase SurE (254 aa).

Positions 8, 9, 38, and 91 each coordinate a divalent metal cation.

It belongs to the SurE nucleotidase family. A divalent metal cation serves as cofactor.

The protein localises to the cytoplasm. It carries out the reaction a ribonucleoside 5'-phosphate + H2O = a ribonucleoside + phosphate. Nucleotidase that shows phosphatase activity on nucleoside 5'-monophosphates. In Anaeromyxobacter dehalogenans (strain 2CP-1 / ATCC BAA-258), this protein is 5'-nucleotidase SurE.